The chain runs to 242 residues: MTNKGKKKVNPFDRKQFYDIQAPSTFTNTYVGKTLVNKSAGTFSSTDALKGRVFEVNLGDLTLEDNAYRKVKLRADEVQGNKILTNFHGMDFTSDKLRSLVRKWQSLVEANVTVKTADDYVLRVFAIAFTKRQANQVKKTTYAQSSKLREVRKKMVEILTREVSNSTLSQLTSKLIPEVISREIEKSTQTIFPLQNVHIRKVKLLKQPKFDLGSLLALHGEASEEKGKKVAGGFKDVVLESV.

It belongs to the eukaryotic ribosomal protein eS1 family. In terms of assembly, component of the small ribosomal subunit. Mature ribosomes consist of a small (40S) and a large (60S) subunit. The 40S subunit contains about 33 different proteins and 1 molecule of RNA (18S). The 60S subunit contains about 49 different proteins and 3 molecules of RNA (25S, 5.8S and 5S).

The protein resides in the cytoplasm. The polypeptide is Small ribosomal subunit protein eS1 (Lodderomyces elongisporus (strain ATCC 11503 / CBS 2605 / JCM 1781 / NBRC 1676 / NRRL YB-4239) (Yeast)).